A 359-amino-acid polypeptide reads, in one-letter code: DNA polymerase IV (359 aa).

Residues 4–184 (IVHVDMDAFY…LKVNRIPGVG (181 aa)) form the UmuC domain. Asp-8 and Asp-102 together coordinate Mg(2+). Residue Glu-103 is part of the active site.

Belongs to the DNA polymerase type-Y family. Monomer. It depends on Mg(2+) as a cofactor.

It is found in the cytoplasm. It carries out the reaction DNA(n) + a 2'-deoxyribonucleoside 5'-triphosphate = DNA(n+1) + diphosphate. Its function is as follows. Poorly processive, error-prone DNA polymerase involved in untargeted mutagenesis. Copies undamaged DNA at stalled replication forks, which arise in vivo from mismatched or misaligned primer ends. These misaligned primers can be extended by PolIV. Exhibits no 3'-5' exonuclease (proofreading) activity. May be involved in translesional synthesis, in conjunction with the beta clamp from PolIII. This chain is DNA polymerase IV, found in Xanthomonas oryzae pv. oryzae (strain MAFF 311018).